A 235-amino-acid polypeptide reads, in one-letter code: Orotidine 5'-phosphate decarboxylase (235 aa).

Substrate contacts are provided by residues Asp-17, Lys-39, 66 to 75 (DLKLHDIGNT), Thr-121, Arg-182, Gln-191, Gly-211, and Arg-212. Lys-68 (proton donor) is an active-site residue.

Belongs to the OMP decarboxylase family. Type 1 subfamily. Homodimer.

It catalyses the reaction orotidine 5'-phosphate + H(+) = UMP + CO2. The protein operates within pyrimidine metabolism; UMP biosynthesis via de novo pathway; UMP from orotate: step 2/2. Catalyzes the decarboxylation of orotidine 5'-monophosphate (OMP) to uridine 5'-monophosphate (UMP). The protein is Orotidine 5'-phosphate decarboxylase of Rhodopseudomonas palustris (strain HaA2).